The primary structure comprises 221 residues: UPF0758 protein NTHI1125 (221 aa).

The 124-residue stretch at 98 to 221 (PIINDLETVK…CYSFAENCLL (124 aa)) folds into the MPN domain. Positions 170, 172, and 183 each coordinate Zn(2+). A JAMM motif motif is present at residues 170–183 (HNHPSGITEPSYSD).

This sequence belongs to the UPF0758 family.

The chain is UPF0758 protein NTHI1125 from Haemophilus influenzae (strain 86-028NP).